The primary structure comprises 463 residues: Cysteine--tRNA ligase (463 aa).

Cys29 contributes to the Zn(2+) binding site. The 'HIGH' region signature appears at Met31–His41. The Zn(2+) site is built by Cys218, His243, and Glu247. The 'KMSKS' region signature appears at Lys275–Ser279. Lys278 contributes to the ATP binding site.

The protein belongs to the class-I aminoacyl-tRNA synthetase family. In terms of assembly, monomer. Zn(2+) is required as a cofactor.

The protein resides in the cytoplasm. The enzyme catalyses tRNA(Cys) + L-cysteine + ATP = L-cysteinyl-tRNA(Cys) + AMP + diphosphate. The polypeptide is Cysteine--tRNA ligase (Polaromonas naphthalenivorans (strain CJ2)).